The sequence spans 1499 residues: Ubiquitinating/deubiquitinating enzyme SdeA (1499 aa).

The tract at residues 1 to 193 is deubiquitinase; sequence MPKYVEGVEL…GKALRENTEK (193 aa). Residues histidine 64 and aspartate 80 each act as for deubiquitinase activity in the active site. Residue cysteine 118 is the Nucleophile; for deubiquitinase activity of the active site. A mono-ADP-ribosyltransferase region spans residues 760–1000; sequence PPTRLFRGLN…KALAAFPSDT (241 aa). 766 to 772 lines the NAD(+) pocket; the sequence is RGLNLSE. A 5-glutamyl glutamate modification is found at glutamate 860. Residue glutamate 862 participates in NAD(+) binding. Residues 1059 to 1181 adopt a coiled-coil conformation; that stretch reads KEMGTIRREL…IDTKLADAYL (123 aa).

It belongs to the SidE family. Interacts with IcmS. Post-translationally, is able to ubiquitinate itself, but this modification is not required to ubiquitinate Rab33b. In terms of processing, glutamylated at Glu-860 by SidJ; glutamylation inhibits SdeA activity to catalyze the production of ADP-ribosylated ubiquitin.

Its subcellular location is the secreted. It is found in the host cell. It carries out the reaction L-arginyl-[protein] + NAD(+) = N(omega)-(ADP-D-ribosyl)-L-arginyl-[protein] + nicotinamide + H(+). Its activity is regulated as follows. Ubiquitination catalyzed by SdeA is insensitive to the cysteine alkylation agent maleimide, suggesting that a cysteine conjugation of ubiquitin does not form during the reaction. Secreted effector that interferes with the host cell ubiquitin pathway and is required for intracellular bacterial replication. Catalyzes the ubiquitination of several mammalian Rab proteins (Rab33b, Rab1, Rab6a and Rab30) during L.pneumophila infection, without engaging the standard cellular enzyme cascade (E1 and E2). Transfers an ADP-ribose moiety from NAD to the 'Arg-42' residue of ubiquitin in a reaction that releases nicotinamide. The modified ubiquitin is subsequently transferred to serine residues of the substrate protein via a phosphoribose linker that results in the release of AMP. Cannot ubiquitinate the endosomal Rab5 or the cytoskeletal small GTPase Rac1. Also acts as a deubiquitinase (DUB), catalyzing the cleavage of three of the most abundant polyubiquitin chains ('Lys-11', 'Lys-48' and 'Lys-63') with a distinct preference for 'Lys-63' linkages; is thus able to efficiently remove 'Lys-63'-linked polyubiquitin chains from the phagosomal surface. Is also able to remove NEDD8 from neddylated proteins, but is unable to recognize SUMO. The DUB activity of SdeA is important for regulating the dynamics of ubiquitin association with the bacterial phagosome, but is dispensable for its role in intracellular bacterial replication. The polypeptide is Ubiquitinating/deubiquitinating enzyme SdeA (Legionella pneumophila subsp. pneumophila (strain Philadelphia 1 / ATCC 33152 / DSM 7513)).